Here is a 1240-residue protein sequence, read N- to C-terminus: Neurofascin (1240 aa).

The N-terminal stretch at M1–A24 is a signal peptide. Over I25–W1110 the chain is Extracellular. 6 consecutive Ig-like C2-type domains span residues P41–S137, P143–T230, P244–R332, P337–S424, P430–E517, and P521–A603. Disulfide bonds link C63–C118, C162–C213, C268–C316, and C358–C408. A glycan (N-linked (GlcNAc...) asparagine) is linked at N305. N409 and N446 each carry an N-linked (GlcNAc...) asparagine glycan. 2 disulfide bridges follow: C452–C501 and C543–C592. The residue at position 481 (Y481) is a Phosphotyrosine. N483 carries an N-linked (GlcNAc...) asparagine glycan. Phosphoserine is present on S485. Fibronectin type-III domains are found at residues R630–A725, P727–D823, A827–A923, and A1007–T1099. Residues S710–R740 are disordered. N-linked (GlcNAc...) asparagine glycans are attached at residues N752, N778, N866, and N881. The tract at residues A902–L942 is disordered. The span at G907 to S916 shows a compositional bias: low complexity. Residues P917–P933 are compositionally biased toward pro residues. Residues F1111–I1131 traverse the membrane as a helical segment. Residues K1132–A1240 lie on the Cytoplasmic side of the membrane. The interval V1141–A1240 is disordered. Residues P1154–D1165 are compositionally biased toward acidic residues. Phosphoserine occurs at positions 1160, 1174, 1187, 1190, 1226, 1227, and 1231. The segment covering L1171–Q1184 has biased composition (polar residues).

It belongs to the immunoglobulin superfamily. L1/neurofascin/NgCAM family. In terms of assembly, horseshoe-shaped homodimer. Probable constituent of a NFASC/NRCAM/ankyrin-G complex. Associates with the sodium channel beta-1 (SCN1B) and beta-3 (SCN3B) subunits. Interacts with GLDN/gliomedin. Interacts with MYOC.

It localises to the cell membrane. Its function is as follows. Cell adhesion, ankyrin-binding protein which may be involved in neurite extension, axonal guidance, synaptogenesis, myelination and neuron-glial cell interactions. The polypeptide is Neurofascin (Nfasc) (Mus musculus (Mouse)).